A 499-amino-acid chain; its full sequence is Dipeptide and tripeptide permease A (499 aa).

Over methionine 1–arginine 34 the chain is Cytoplasmic. Residues phenylalanine 35 to serine 55 traverse the membrane as a helical segment. Over glutamate 56–serine 59 the chain is Periplasmic. The helical transmembrane segment at isoleucine 60–leucine 80 threads the bilayer. Residues glycine 81–arginine 89 are Cytoplasmic-facing. A helical transmembrane segment spans residues valine 90 to histidine 110. A topological domain (periplasmic) is located at residue aspartate 111. Residues alanine 112–asparagine 132 traverse the membrane as a helical segment. The Cytoplasmic segment spans residues proline 133–threonine 153. The helical transmembrane segment at methionine 154–alanine 174 threads the bilayer. Over glutamate 175–glycine 178 the chain is Periplasmic. A helical membrane pass occupies residues tryptophan 179–phenylalanine 199. Over cysteine 200 to histidine 217 the chain is Cytoplasmic. Residues valine 218–leucine 238 traverse the membrane as a helical segment. Residues leucine 239 to arginine 246 lie on the Periplasmic side of the membrane. A helical transmembrane segment spans residues leucine 247–methionine 267. The Cytoplasmic segment spans residues glutamine 268 to lysine 274. Residues methionine 275 to methionine 295 traverse the membrane as a helical segment. Over proline 296–glutamine 320 the chain is Periplasmic. The chain crosses the membrane as a helical span at residues phenylalanine 321–asparagine 341. Residues lysine 342–proline 350 are Cytoplasmic-facing. The helical transmembrane segment at phenylalanine 351–alanine 371 threads the bilayer. Residues lysine 372–asparagine 383 are Periplasmic-facing. Residues tryptophan 384 to leucine 404 traverse the membrane as a helical segment. At alanine 405 to arginine 414 the chain is on the cytoplasmic side. Residues leucine 415–glycine 435 traverse the membrane as a helical segment. Over lysine 436–arginine 459 the chain is Periplasmic. The chain crosses the membrane as a helical span at residues valine 460–proline 480. Over leucine 481–alanine 499 the chain is Cytoplasmic.

Belongs to the major facilitator superfamily. Proton-dependent oligopeptide transporter (POT/PTR) (TC 2.A.17) family. DtpA subfamily.

The protein localises to the cell inner membrane. In terms of biological role, proton-dependent permease that transports di- and tripeptides. This chain is Dipeptide and tripeptide permease A, found in Cronobacter turicensis (strain DSM 18703 / CCUG 55852 / LMG 23827 / z3032).